Reading from the N-terminus, the 493-residue chain is Dihydro-heme d1 dehydrogenase (493 aa).

Positions 1-18 (MRLIGLALGLLLGALAQA) are cleaved as a signal peptide. The Cytochrome c domain occupies 19–96 (GEAPGEALYR…ALVAYLYQAP (78 aa)). Heme c is bound by residues Cys31, Cys34, His35, Arg68, and Met73. The D1-heme domain stretch occupies residues 114 to 468 (PHPLATLPSR…YDAHSLEEVK (355 aa)). Heme d1 is bound by residues His165, Gly167, Lys169, Arg182, Arg207, Asn208, His341, Arg390, and His435. Residue Arg182 participates in heme c binding.

It belongs to the cytochrome c family. Monomer. Requires heme c as cofactor.

The protein localises to the periplasm. It carries out the reaction dihydro-heme d1 + A = heme d1 + AH2. The protein operates within porphyrin-containing compound metabolism. In terms of biological role, involved in heme d1 biosynthesis. Catalyzes the introduction of a double bond into the propionate side chain of pyrrole ring D of dihydro-heme d1, therefore converting dihydro-heme d1 to heme d1. The sequence is that of Dihydro-heme d1 dehydrogenase from Pseudomonas aeruginosa (strain ATCC 15692 / DSM 22644 / CIP 104116 / JCM 14847 / LMG 12228 / 1C / PRS 101 / PAO1).